Reading from the N-terminus, the 656-residue chain is Protein EMBRYO SAC DEVELOPMENT ARREST 30 (656 aa).

A helical; Signal-anchor for type II membrane protein transmembrane segment spans residues 9-29; the sequence is WIALFVLILSMGSLVVHLSMT. An N-linked (GlcNAc...) asparagine glycan is attached at Asn-119. Residues 381-426 form a disordered region; the sequence is LSELVGPETPLPENTYKMPPRKSDKQLKEEWNKAGPRPRPLPPPPD. The span at 401-412 shows a compositional bias: basic and acidic residues; that stretch reads RKSDKQLKEEWN. The segment covering 417-426 has biased composition (pro residues); that stretch reads RPRPLPPPPD. Asn-444, Asn-522, Asn-534, and Asn-544 each carry an N-linked (GlcNAc...) asparagine glycan. The segment at 631–656 is disordered; it reads SETEEEFAKSKVASAFDQDEEWDPND. The segment covering 647–656 has biased composition (acidic residues); it reads DQDEEWDPND.

The protein belongs to the glycosyltransferase GT106 family.

It localises to the membrane. It participates in glycan metabolism. The chain is Protein EMBRYO SAC DEVELOPMENT ARREST 30 from Arabidopsis thaliana (Mouse-ear cress).